Consider the following 311-residue polypeptide: Cell division control protein 2 homolog 3 (311 aa).

Residues 23 to 306 (YNRMDILGEG…AKAALQHPWF (284 aa)) form the Protein kinase domain. ATP-binding positions include 29–37 (LGEGTYGVV) and Lys52. Residue Thr33 is modified to Phosphothreonine. The residue at position 34 (Tyr34) is a Phosphotyrosine. Asp145 serves as the catalytic Proton acceptor.

This sequence belongs to the protein kinase superfamily. CMGC Ser/Thr protein kinase family. CDC2/CDKX subfamily. In terms of assembly, forms a stable but non-covalent complex with a regulatory subunit and with a cyclin.

The enzyme catalyses L-seryl-[protein] + ATP = O-phospho-L-seryl-[protein] + ADP + H(+). It carries out the reaction L-threonyl-[protein] + ATP = O-phospho-L-threonyl-[protein] + ADP + H(+). Its activity is regulated as follows. Phosphorylation at Thr-33 or Tyr-34 inactivates the enzyme. Functionally, probably involved in the control of the cell cycle. The chain is Cell division control protein 2 homolog 3 (CRK3) from Trypanosoma brucei brucei.